Here is a 574-residue protein sequence, read N- to C-terminus: Phenylalanine--tRNA ligase beta subunit (574 aa).

The region spanning 278–353 is the B5 domain; that stretch reads LTPKEFEVEL…IAYGYNEIEP (76 aa). 4 residues coordinate Mg(2+): Asp-331, Asp-337, Glu-340, and Asp-341.

It belongs to the phenylalanyl-tRNA synthetase beta subunit family. Type 2 subfamily. In terms of assembly, tetramer of two alpha and two beta subunits. The cofactor is Mg(2+).

It is found in the cytoplasm. The catalysed reaction is tRNA(Phe) + L-phenylalanine + ATP = L-phenylalanyl-tRNA(Phe) + AMP + diphosphate + H(+). The sequence is that of Phenylalanine--tRNA ligase beta subunit from Thermococcus kodakarensis (strain ATCC BAA-918 / JCM 12380 / KOD1) (Pyrococcus kodakaraensis (strain KOD1)).